A 402-amino-acid chain; its full sequence is MTYQQPDAKGFYGKFGGQFVPETLMTAVIELDKAYREAKEDSSFQAELDDLLKNYVGRETPLYHAKRLTDYIGGAQIYLKREDLNHTGAHKINNALGQVLLAKRMGKKKIIAETGAGQHGVATATAAALFDMDCTIYMGEEDVKRQALNVFRMELLGAKVFSVTDGSRVLKDAVNAALRAWVAGIEDTHYIMGSALGPAPFPEIVRDFQSVIGREAKRQYAEISGGKLPDAVMACIGGGSNAIGMFYPFVNDKSVAMYGAEASGLGLDTEKHAATFAKGRPGILHGALMDVLQDAHGQIMEAFSISAGLDYPGVGPEHCYFNEIGRATYDSITDEEALEGFKLLSCLEGIIPALESSHAIALAQKVAAKMSPDQSLIVCLSGRGDKDVMQVKERFEAEAEGK.

Lysine 91 is subject to N6-(pyridoxal phosphate)lysine.

The protein belongs to the TrpB family. As to quaternary structure, tetramer of two alpha and two beta chains. The cofactor is pyridoxal 5'-phosphate.

The enzyme catalyses (1S,2R)-1-C-(indol-3-yl)glycerol 3-phosphate + L-serine = D-glyceraldehyde 3-phosphate + L-tryptophan + H2O. It participates in amino-acid biosynthesis; L-tryptophan biosynthesis; L-tryptophan from chorismate: step 5/5. The beta subunit is responsible for the synthesis of L-tryptophan from indole and L-serine. This chain is Tryptophan synthase beta chain, found in Streptococcus thermophilus (strain CNRZ 1066).